The chain runs to 280 residues: MDIKINGITVGNDAPFVLFGGINVLEDLDSTLQTCAHYVEVTRKLGIPYIFKASFDKANRSSIHSYRGVGLEEGLKIFEKVKAEFGIPVITDVHEPHQCQPVAEVCDVIQLPAFLARQTDLVAAMAETGNVINIKKPQFLSPSQMKNIVEKFREAGNGKLILCERGSSFGYDNLVVDMLGFGVMKQTCGNLPVIFDVTHSLQTRDAGSAASGGRRAQALDLALAGMATRLAGLFLESHPDPKLAKCDGPSALPLHLLEDFLIRIKALDDLIKSQPILTIE.

Belongs to the KdsA family.

The protein resides in the cytoplasm. It carries out the reaction D-arabinose 5-phosphate + phosphoenolpyruvate + H2O = 3-deoxy-alpha-D-manno-2-octulosonate-8-phosphate + phosphate. It participates in carbohydrate biosynthesis; 3-deoxy-D-manno-octulosonate biosynthesis; 3-deoxy-D-manno-octulosonate from D-ribulose 5-phosphate: step 2/3. It functions in the pathway bacterial outer membrane biogenesis; lipopolysaccharide biosynthesis. The sequence is that of 2-dehydro-3-deoxyphosphooctonate aldolase from Neisseria meningitidis serogroup C / serotype 2a (strain ATCC 700532 / DSM 15464 / FAM18).